A 649-amino-acid chain; its full sequence is Probable cyclic nucleotide-gated ion channel 12 (649 aa).

The Cytoplasmic portion of the chain corresponds to 1-43 (MNHRRSKFARIDSMGVDGKLKSVRGRLKKVYGKMKTLENWRKT). The helical transmembrane segment at 44 to 64 (VLLACVVALAIDPLFLFIPLI) threads the bilayer. Over 65–76 (DSQRFCFTFDKT) the chain is Extracellular. A helical transmembrane segment spans residues 77–97 (LVAVVCVIRTFIDTFYVIHII). The Cytoplasmic segment spans residues 98-128 (YYLITETIAPRSQASLRGEIVVHSKATLKTR). The helical transmembrane segment at 129 to 149 (LLFHFIVDIISVLPIPQVVVL) threads the bilayer. At 150–162 (TLIPLSASLVSER) the chain is on the extracellular side. A helical membrane pass occupies residues 163–183 (ILKWIILSQYVPRIIRMYPLY). Over 184–200 (KEVTRAFGTVAESKWAG) the chain is Cytoplasmic. The helical transmembrane segment at 201-221 (AALNLFLYMLHSYVFGAFWYL) threads the bilayer. The Extracellular segment spans residues 222–329 (SSIERKSKCW…QNLETSNSAG (108 aa)). A helical transmembrane segment spans residues 330–350 (EIFFAIIICVSGLLLFAVLIG). The Cytoplasmic segment spans residues 351–649 (NVQKYLQSST…ADLEFAKAEA (299 aa)). A nucleoside 3',5'-cyclic phosphate contacts are provided by residues 436–559 (LNIM…TFRL) and glutamate 507. Residues 545–560 (LNVFQRQKLQRTFRLY) are calmodulin-binding. The region spanning 565–594 (RSWAAFFIQAAWRKHCKRKLSKTRDNENIP) is the IQ domain. Residues 618–649 (RRKDTADCSSSPDMSPPVPHKPADLEFAKAEA) are disordered. The span at 638-649 (KPADLEFAKAEA) shows a compositional bias: basic and acidic residues.

The protein belongs to the cyclic nucleotide-gated cation channel (TC 1.A.1.5) family. In terms of assembly, homotetramer or heterotetramer.

It localises to the cell membrane. Functionally, probable cyclic nucleotide-gated ion channel. In Arabidopsis thaliana (Mouse-ear cress), this protein is Probable cyclic nucleotide-gated ion channel 12 (CNGC12).